Here is a 174-residue protein sequence, read N- to C-terminus: Crossover junction endodeoxyribonuclease RuvC (174 aa).

Active-site residues include Asp-8, Glu-67, and Asp-139. Residues Asp-8, Glu-67, and Asp-139 each contribute to the Mg(2+) site.

The protein belongs to the RuvC family. Homodimer which binds Holliday junction (HJ) DNA. The HJ becomes 2-fold symmetrical on binding to RuvC with unstacked arms; it has a different conformation from HJ DNA in complex with RuvA. In the full resolvosome a probable DNA-RuvA(4)-RuvB(12)-RuvC(2) complex forms which resolves the HJ. Mg(2+) is required as a cofactor.

It localises to the cytoplasm. It catalyses the reaction Endonucleolytic cleavage at a junction such as a reciprocal single-stranded crossover between two homologous DNA duplexes (Holliday junction).. Functionally, the RuvA-RuvB-RuvC complex processes Holliday junction (HJ) DNA during genetic recombination and DNA repair. Endonuclease that resolves HJ intermediates. Cleaves cruciform DNA by making single-stranded nicks across the HJ at symmetrical positions within the homologous arms, yielding a 5'-phosphate and a 3'-hydroxyl group; requires a central core of homology in the junction. The consensus cleavage sequence is 5'-(A/T)TT(C/G)-3'. Cleavage occurs on the 3'-side of the TT dinucleotide at the point of strand exchange. HJ branch migration catalyzed by RuvA-RuvB allows RuvC to scan DNA until it finds its consensus sequence, where it cleaves and resolves the cruciform DNA. This chain is Crossover junction endodeoxyribonuclease RuvC, found in Pseudomonas savastanoi pv. phaseolicola (strain 1448A / Race 6) (Pseudomonas syringae pv. phaseolicola (strain 1448A / Race 6)).